We begin with the raw amino-acid sequence, 351 residues long: Phosphoribosylformylglycinamidine cyclo-ligase (351 aa).

It belongs to the AIR synthase family.

It localises to the cytoplasm. The catalysed reaction is 2-formamido-N(1)-(5-O-phospho-beta-D-ribosyl)acetamidine + ATP = 5-amino-1-(5-phospho-beta-D-ribosyl)imidazole + ADP + phosphate + H(+). It participates in purine metabolism; IMP biosynthesis via de novo pathway; 5-amino-1-(5-phospho-D-ribosyl)imidazole from N(2)-formyl-N(1)-(5-phospho-D-ribosyl)glycinamide: step 2/2. This is Phosphoribosylformylglycinamidine cyclo-ligase from Burkholderia mallei (strain NCTC 10247).